Reading from the N-terminus, the 890-residue chain is Wolframin (890 aa).

M1 carries the post-translational modification N-acetylmethionine. The disordered stretch occupies residues 1 to 86 (MDSNTAPLGP…TGPTKGDMEI (86 aa)). The interval 1–321 (MDSNTAPLGP…MHWLSTIIPT (321 aa)) is interaction with ATP6V1A. Residues 10-20 (PSCPQPPPAPQ) show a composition bias toward pro residues. T30 is modified (phosphothreonine; by FAM20C). Residue S32 is modified to Phosphoserine; by FAM20C. Position 157 is a phosphoserine (S157). Transmembrane regions (helical) follow at residues 314–334 (WLSTIIPTHHINALIFFFIVS), 340–360 (FFAFFIPLVIFYLSFISMVIC), 402–422 (LEPYAHFLLSVFFVIFSFPIA), 427–447 (IPCSELAVITGFFTVTSYLSL), 465–485 (AGLLSLLPSMPLNWPYLKVLG), 496–516 (LVVLNVSVPCLLYVYLLYLFF), 529–549 (CYLVPYLVCFMWCELSVVILL), 563–583 (YFLFLFALPILVAGLALVGVL), 589–609 (FTSLELTKIAVTVAVCSVPLL), and 632–652 (MVKLILVWLTAIVLFCWFYVY). At 653 to 869 (RSEGMKVYNS…HVKIEHDWRS (217 aa)) the chain is on the lumenal side. N661 and N746 each carry an N-linked (GlcNAc...) asparagine glycan. A helical transmembrane segment spans residues 870 to 890 (TVHGAVKFAFDFFFFPFLSAA).

As to quaternary structure, interacts with ATP6V1A. Highly expressed in heart followed by brain, placenta, lung and pancreas. Weakly expressed in liver, kidney and skeletal muscle. Also expressed in islet and beta-cell insulinoma cell line.

Its subcellular location is the endoplasmic reticulum membrane. It localises to the cytoplasmic vesicle. The protein localises to the secretory vesicle. Functionally, participates in the regulation of cellular Ca(2+) homeostasis, at least partly, by modulating the filling state of the endoplasmic reticulum Ca(2+) store. Negatively regulates the ER stress response and positively regulates the stability of V-ATPase subunits ATP6V1A and ATP1B1 by preventing their degradation through an unknown proteasome-independent mechanism. This is Wolframin (WFS1) from Homo sapiens (Human).